A 1125-amino-acid chain; its full sequence is Telomerase reverse transcriptase (1125 aa).

The interval 1–239 is RNA-interacting domain 1; that stretch reads MPRAPRCPAV…TKRLLSLTST (239 aa). Positions 58–205 are GQ motif; sequence VPWGSQPPPA…RPVGGNFTNL (148 aa). The tract at residues 137 to 141 is required for regulating specificity for telomeric DNA and for processivity for primer elongation; the sequence is WMLLL. Over residues 206-216 the composition is skewed to polar residues; that stretch reads GSAHQIKNSGH. The segment at 206–304 is disordered; sequence GSAHQIKNSG…ASDPSLSGSV (99 aa). Positions 240 to 328 are linker; it reads NVPSAKKARF…PPQDAEKLRP (89 aa). Over residues 247-259 the composition is skewed to basic and acidic residues; sequence ARFEPALRVDKGP. The segment covering 273–287 has biased composition (low complexity); the sequence is APSPAASPKVPPAAK. Residues 306–528 form a required for oligomerization region; it reads CKHKPSSSSL…VPAAEHRLRE (223 aa). Residues 329-540 are RNA-interacting domain 2; it reads FTETRHFLYS…LAMFLFWLMD (212 aa). Residues 332 to 337 carry the TFLY; involved in RNA binding motif; the sequence is TRHFLY. The segment at 381 to 511 is QFP motif; it reads FCRTRRLPRR…VKVEDCHWLR (131 aa). The interval 402 to 422 is CP motif; that stretch reads LMNHAKCQYVRFLRSHCRFRT. Residue Ser-447 is modified to Phosphoserine; by DYRK2. Residues 595–928 enclose the Reverse transcriptase domain; that stretch reads EVKHHQDTWL…CLFPWCGLLL (334 aa). Residue Tyr-697 is modified to Phosphotyrosine; by SRC-type Tyr-kinases. Residues Asp-702, Asp-861, and Asp-862 each coordinate Mg(2+). The required for oligomerization stretch occupies residues 907-921; the sequence is LGGAAPHQLPAHCLF. The primer grip sequence stretch occupies residues 923 to 927; sequence WCGLL. The CTE stretch occupies residues 929-1125; it reads DTRTLEVFCD…LSTDFQTILD (197 aa).

The protein belongs to the reverse transcriptase family. Telomerase subfamily. In terms of assembly, catalytic component of the telomerase holoenzyme complex composed of one molecule of TERT, one molecule of WRAP53/TCAB1, two molecules of H/ACA ribonucleoprotein complex subunits DKC1, NOP10, NHP2 and GAR1, and a telomerase RNA template component (TERC). The telomerase holoenzyme complex is associated with TEP1, SMG6/EST1A and POT1. The molecular chaperone HSP90/P23 complex is required for correct assembly and stabilization of the active telomerase. Interacts directly with HSP90A and PTGES3. Interacts with HSPA1A; the interaction occurs in the absence of TERC and dissociates once the complex has formed. Interacts with RAN; the interaction promotes nuclear export of TERT. Interacts with XPO1. Interacts with PTPN11; the interaction retains TERT in the nucleus. Interacts with NCL (via RRM1 and C-terminal RRM4/Arg/Gly-rich domains); the interaction is important for nucleolar localization of TERT. Interacts with SMARCA4 (via the bromodomain); the interaction regulates Wnt-mediated signaling. Interacts with MCRS1 (isoform MCRS2); the interaction inhibits in vitro telomerase activity. Interacts with PIF1; the interaction has no effect on the elongation activity of TERT. Interacts with PML; the interaction recruits TERT to PML bodies and inhibits telomerase activity. Interacts with GNL3L. Interacts with isoform 1 and isoform 2 of NVL. Interacts with DHX36. Interacts with ATF7. In terms of processing, phosphorylation at Tyr-697 under oxidative stress leads to translocation of TERT to the cytoplasm and reduces its antiapoptotic activity. Dephosphorylated by SHP2/PTPN11 leading to nuclear retention. Phosphorylation at the G2/M phase at Ser-447 by DYRK2 promotes ubiquitination by the EDVP complex and degradation. Post-translationally, ubiquitinated by the EDVP complex, a E3 ligase complex following phosphorylation at Ser-447 by DYRK2. Ubiquitinated leads to proteasomal degradation. Isoform 1 and isoform 2 expressed in thymus, liver, spleen, lung, kidney and testis. High level of inactive isoform 3 in adult hippocampus, low level in heart, cortex and cerebellum.

The protein resides in the nucleus. The protein localises to the nucleolus. It localises to the nucleoplasm. It is found in the chromosome. Its subcellular location is the telomere. The protein resides in the cytoplasm. The protein localises to the PML body. The catalysed reaction is DNA(n) + a 2'-deoxyribonucleoside 5'-triphosphate = DNA(n+1) + diphosphate. Its function is as follows. Telomerase is a ribonucleoprotein enzyme essential for the replication of chromosome termini in most eukaryotes. Active in progenitor and cancer cells. Inactive, or very low activity, in normal somatic cells. Catalytic component of the teleromerase holoenzyme complex whose main activity is the elongation of telomeres by acting as a reverse transcriptase that adds simple sequence repeats to chromosome ends by copying a template sequence within the RNA component of the enzyme. Catalyzes the RNA-dependent extension of 3'-chromosomal termini with the 6-nucleotide telomeric repeat unit, 5'-TTAGGG-3'. The catalytic cycle involves primer binding, primer extension and release of product once the template boundary has been reached or nascent product translocation followed by further extension. More active on substrates containing 2 or 3 telomeric repeats. Telomerase activity is regulated by a number of factors including telomerase complex-associated proteins, chaperones and polypeptide modifiers. Modulates Wnt signaling. Plays important roles in aging and antiapoptosis. The protein is Telomerase reverse transcriptase of Rattus norvegicus (Rat).